We begin with the raw amino-acid sequence, 684 residues long: DNA gyrase subunit B, novobiocin-sensitive (684 aa).

Residues 1-22 (MADSGNPNENTPSVATGENGEV) are disordered. Positions 154–302 (VKTDGYRWTQ…RMLSVEIAMQ (149 aa)) are novobiocin-binding. Residues 463-577 (CEIFIVEGDS…AGHVYLSRPP (115 aa)) enclose the Toprim domain. The Mg(2+) site is built by Glu-469, Asp-542, and Asp-544.

It belongs to the type II topoisomerase GyrB family. As to quaternary structure, heterotetramer, composed of two GyrA and two GyrB chains. In the heterotetramer, GyrA contains the active site tyrosine that forms a transient covalent intermediate with DNA, while GyrB binds cofactors and catalyzes ATP hydrolysis. The cofactor is Mg(2+). Requires Mn(2+) as cofactor. Ca(2+) is required as a cofactor.

It localises to the cytoplasm. The enzyme catalyses ATP-dependent breakage, passage and rejoining of double-stranded DNA.. A type II topoisomerase that negatively supercoils closed circular double-stranded (ds) DNA in an ATP-dependent manner to modulate DNA topology and maintain chromosomes in an underwound state. Negative supercoiling favors strand separation, and DNA replication, transcription, recombination and repair, all of which involve strand separation. Also able to catalyze the interconversion of other topological isomers of dsDNA rings, including catenanes and knotted rings. Type II topoisomerases break and join 2 DNA strands simultaneously in an ATP-dependent manner. The sequence is that of DNA gyrase subunit B, novobiocin-sensitive from Streptomyces niveus (Streptomyces spheroides).